The primary structure comprises 568 residues: Urease subunit alpha (568 aa).

The Urease domain occupies 131-568 (GGIDTHIHFI…LPMAQRYFLF (438 aa)). Residues histidine 136, histidine 138, and lysine 219 each coordinate Ni(2+). An N6-carboxylysine modification is found at lysine 219. Residue histidine 221 participates in substrate binding. Residues histidine 248 and histidine 274 each coordinate Ni(2+). Histidine 322 (proton donor) is an active-site residue. Aspartate 362 is a binding site for Ni(2+).

The protein belongs to the metallo-dependent hydrolases superfamily. Urease alpha subunit family. Heterotrimer of UreA (gamma), UreB (beta) and UreC (alpha) subunits. Three heterotrimers associate to form the active enzyme. Ni cation is required as a cofactor. In terms of processing, carboxylation allows a single lysine to coordinate two nickel ions.

The protein resides in the cytoplasm. It carries out the reaction urea + 2 H2O + H(+) = hydrogencarbonate + 2 NH4(+). Its pathway is nitrogen metabolism; urea degradation; CO(2) and NH(3) from urea (urease route): step 1/1. The polypeptide is Urease subunit alpha (Trichormus variabilis (strain ATCC 29413 / PCC 7937) (Anabaena variabilis)).